We begin with the raw amino-acid sequence, 397 residues long: Phosphoglycerate kinase (397 aa).

Substrate is bound by residues 23–25, R38, 61–64, R122, and R155; these read DFN and HMGK. ATP is bound by residues K206, G296, E327, and 353–356; that span reads GGDS.

Belongs to the phosphoglycerate kinase family. In terms of assembly, monomer.

The protein resides in the cytoplasm. The catalysed reaction is (2R)-3-phosphoglycerate + ATP = (2R)-3-phospho-glyceroyl phosphate + ADP. It participates in carbohydrate degradation; glycolysis; pyruvate from D-glyceraldehyde 3-phosphate: step 2/5. In Clostridium perfringens (strain SM101 / Type A), this protein is Phosphoglycerate kinase.